A 1383-amino-acid polypeptide reads, in one-letter code: Periaxin (1383 aa).

Residue serine 7 is modified to Phosphoserine. The 84-residue stretch at 16-99 folds into the PDZ domain; the sequence is LVEIIVETEA…YKVSFCLKRT (84 aa). The short motif at 70-84 is the Nuclear export signal element; it reads VFFENFKYEDALRLL. Serine 133 and serine 243 each carry phosphoserine. 46 repeat units span residues 432-436, 440-444, 448-452, 456-460, 461-465, 466-470, 474-478, 482-486, 487-491, 492-496, 497-501, 502-506, 507-511, 515-519, 523-527, 531-535, 536-540, 544-548, 549-553, 554-558, 562-566, 567-571, 575-579, 580-584, 585-589, 593-597, 601-605, 606-610, 611-615, 619-623, 627-631, 632-636, 637-641, 645-649, 653-657, 658-662, 663-667, 671-675, 676-680, 684-688, 689-693, 694-698, 699-703, 705-709, 713-717, and 718-722. A 46 X 5 AA approximate tandem repeats of [LVMGIE]-[PSM]-[EDKA]-[LIVMA]-[AQKHPRT]; that may have a tripeptide spacer of [ALKD]-[IPV]-[KPH] region spans residues 432-722; that stretch reads GPEVKAPKGP…VPEMKLPKVP (291 aa). A phosphoserine mark is found at serine 838, serine 971, serine 1020, serine 1271, serine 1275, serine 1277, serine 1285, serine 1323, and serine 1329. The tract at residues 1251–1383 is disordered; it reads KVKSPKLRLP…RIEGTQAAAI (133 aa). Over residues 1267–1277 the composition is skewed to low complexity; sequence SESASGEGSPS. The span at 1346 to 1355 shows a compositional bias: basic and acidic residues; the sequence is GSKDREEGGF. Serine 1361 carries the phosphoserine modification.

It belongs to the periaxin family. As to quaternary structure, homodimer (via PDZ domain). Interacts with SCN10A. Found in a complex with SCN10A. Interacts with DRP2. Identified in a dystroglycan complex that contains at least PRX, DRP2, UTRN, DMD and DAG1. Detected in a complex composed of at least EZR, AHNAK, PPL and PRX. Identified in a complex with EZR, AHNAK, BFSP1, BFSP2, ANK2, PLEC, VIM and spectrin. The N-terminus is blocked. In terms of tissue distribution, detected in sciatic nerve and in trigeminal nerve Schwann cells. Detected in myelinating Schwann cells in sciatic nerve (at protein level).

The protein resides in the nucleus. The protein localises to the cytoplasm. It is found in the cell membrane. It localises to the cell junction. Its function is as follows. Scaffolding protein that functions as part of a dystroglycan complex in Schwann cells, and as part of EZR and AHNAK-containing complexes in eye lens fiber cells. Required for the maintenance of the peripheral myelin sheath that is essential for normal transmission of nerve impulses and normal perception of sensory stimuli. Required for normal transport of MBP mRNA from the perinuclear to the paranodal regions. Required for normal remyelination after nerve injury. Required for normal elongation of Schwann cells and normal length of the internodes between the nodes of Ranvier. The demyelinated nodes of Ranvier permit saltatory transmission of nerve impulses; shorter internodes cause slower transmission of nerve impulses. Required for the formation of appositions between the abaxonal surface of the myelin sheath and the Schwann cell plasma membrane; the Schwann cell cytoplasm is restricted to regions between these appositions. Required for the formation of Cajal bands and of Schmidt-Lanterman incisures that correspond to short, cytoplasm-filled regions on myelinated nerves. Recruits DRP2 to the Schwann cell plasma membrane. Required for normal protein composition of the eye lens fiber cell plasma membrane and normal eye lens fiber cell morphology. This Rattus norvegicus (Rat) protein is Periaxin (Prx).